The following is a 274-amino-acid chain: 4-hydroxy-3-methylbut-2-enyl diphosphate reductase (274 aa).

Residue Cys12 coordinates [4Fe-4S] cluster. (2E)-4-hydroxy-3-methylbut-2-enyl diphosphate contacts are provided by His36 and His70. 2 residues coordinate dimethylallyl diphosphate: His36 and His70. Isopentenyl diphosphate contacts are provided by His36 and His70. Cys92 is a binding site for [4Fe-4S] cluster. A (2E)-4-hydroxy-3-methylbut-2-enyl diphosphate-binding site is contributed by His120. Residue His120 participates in dimethylallyl diphosphate binding. His120 lines the isopentenyl diphosphate pocket. The Proton donor role is filled by Glu122. Thr158 lines the (2E)-4-hydroxy-3-methylbut-2-enyl diphosphate pocket. Cys186 serves as a coordination point for [4Fe-4S] cluster. Residues Ser214, Ser215, Asn216, and Ser258 each coordinate (2E)-4-hydroxy-3-methylbut-2-enyl diphosphate. Positions 214, 215, 216, and 258 each coordinate dimethylallyl diphosphate. 4 residues coordinate isopentenyl diphosphate: Ser214, Ser215, Asn216, and Ser258.

The protein belongs to the IspH family. Requires [4Fe-4S] cluster as cofactor.

It catalyses the reaction isopentenyl diphosphate + 2 oxidized [2Fe-2S]-[ferredoxin] + H2O = (2E)-4-hydroxy-3-methylbut-2-enyl diphosphate + 2 reduced [2Fe-2S]-[ferredoxin] + 2 H(+). It carries out the reaction dimethylallyl diphosphate + 2 oxidized [2Fe-2S]-[ferredoxin] + H2O = (2E)-4-hydroxy-3-methylbut-2-enyl diphosphate + 2 reduced [2Fe-2S]-[ferredoxin] + 2 H(+). The protein operates within isoprenoid biosynthesis; dimethylallyl diphosphate biosynthesis; dimethylallyl diphosphate from (2E)-4-hydroxy-3-methylbutenyl diphosphate: step 1/1. Its pathway is isoprenoid biosynthesis; isopentenyl diphosphate biosynthesis via DXP pathway; isopentenyl diphosphate from 1-deoxy-D-xylulose 5-phosphate: step 6/6. Catalyzes the conversion of 1-hydroxy-2-methyl-2-(E)-butenyl 4-diphosphate (HMBPP) into a mixture of isopentenyl diphosphate (IPP) and dimethylallyl diphosphate (DMAPP). Acts in the terminal step of the DOXP/MEP pathway for isoprenoid precursor biosynthesis. The polypeptide is 4-hydroxy-3-methylbut-2-enyl diphosphate reductase (Helicobacter pylori (strain P12)).